Here is a 404-residue protein sequence, read N- to C-terminus: MSDSKEPRLQQLGLLEEEQLRGLGFRQTRGYKSLAGCLGHGVLVLQLLSFTLLAGLFVQVSKVPSSISQEQSRQDSIYQNLTQLKAAVGELSEKSKLQEIYQELTQLKAAVSELPEKSKQQEIYQELTQLKAAVSELPEKSKLQEIYQELTQLKAAVSELPEKSKLQEIYQELTRLKAAVGELPEKCKLQEIYQELTRLKAAVDELPEKSKLQEIYQELTQLKAAVGELPEKSRLQEIYQELTQLKAAVERLCHPCPWEWTFFQGNCYFISNSQRNWHDSITACQEVGAQLVVIKSAEEQNFLQLQSSRSNRFTWMGLSDLNQEGTWQWVDGSPLLPSFKQYWNRGEPNNVGEEDCAEFSGNGWNDDKCNLAKFWICKKSAASCSRDEEQFLSPAPATPNPPPA.

Residues 1–37 (MSDSKEPRLQQLGLLEEEQLRGLGFRQTRGYKSLAGC) lie on the Cytoplasmic side of the membrane. 3 consecutive short sequence motifs (endocytosis signal) follow at residues 14 to 15 (LL), 16 to 18 (EEE), and 31 to 34 (YKSL). A helical; Signal-anchor for type II membrane protein membrane pass occupies residues 38–58 (LGHGVLVLQLLSFTLLAGLFV). Over 59–404 (QVSKVPSSIS…APATPNPPPA (346 aa)) the chain is Extracellular. N80 carries N-linked (GlcNAc...) asparagine glycosylation. 7 consecutive repeat copies span residues 96 to 118 (KLQE…PEKS), 119 to 141 (KQQE…PEKS), 142 to 164 (KLQE…PEKS), 165 to 187 (KLQE…PEKC), 188 to 210 (KLQE…PEKS), 211 to 233 (KLQE…PEKS), and 234 to 257 (RLQE…HPCP). Residues 96-257 (KLQEIYQELT…AVERLCHPCP (162 aa)) are 7 X approximate tandem repeats. Disulfide bonds link C256-C267, C284-C377, and C356-C369. A C-type lectin domain is found at 263 to 378 (FQGNCYFISN…CNLAKFWICK (116 aa)). The Ca(2+) site is built by E347, N349, V351, E354, N365, and D366.

In terms of assembly, homotetramer. Interacts with C1QBP; the interaction is indicative for a C1q:C1QBP:CD209 signaling complex. Interacts with ICAM2 and ICAM3 by binding to mannose-like carbohydrates. Interacts (via C-type lectin domain) with CEACAM1 (via Lewis X moieties); this interaction is regulated by the glycosylation pattern of CEACAM1 on cell types and regulates contact between dendritic cells and neutrophils.

It is found in the membrane. Pathogen-recognition receptor expressed on the surface of immature dendritic cells (DCs) and involved in initiation of primary immune response. Thought to mediate the endocytosis of pathogens which are subsequently degraded in lysosomal compartments. The receptor returns to the cell membrane surface and the pathogen-derived antigens are presented to resting T-cells via MHC class II proteins to initiate the adaptive immune response. Probably recognizes in a calcium-dependent manner high mannose N-linked oligosaccharides in a variety of pathogen antigens. Functionally, on DCs it is a high affinity receptor for ICAM2 and ICAM3 by binding to mannose-like carbohydrates. May act as a DC rolling receptor that mediates transendothelial migration of DC presursors from blood to tissues by binding endothelial ICAM2. Seems to regulate DC-induced T-cell proliferation by binding to ICAM3 on T-cells in the immunological synapse formed between DC and T-cells. The protein is CD209 antigen (CD209) of Pongo pygmaeus (Bornean orangutan).